Here is a 553-residue protein sequence, read N- to C-terminus: Efflux pump alnA (553 aa).

Residues 1-21 (MSSDDTVKQEHSCSADSEKQD) show a composition bias toward basic and acidic residues. The interval 1–36 (MSSDDTVKQEHSCSADSEKQDSSCASDNEQPKEPQS) is disordered. 13 helical membrane passes run 40-60 (IHGL…FLFA), 85-105 (WSGV…LQIF), 110-130 (IKWM…ICGA), 136-156 (MLIG…VGVM), 174-194 (AMGL…GAFT), 202-222 (WSFY…IFLL), 243-263 (LVGT…INFA), 270-290 (SEPG…VFGI), 319-339 (LLFV…YVIP), 355-375 (VRLL…GYLA), 382-402 (IPWY…MYTI), 413-433 (GYSS…HAVA), and 522-542 (TYIL…GMKW).

It belongs to the major facilitator superfamily. TCR/Tet family.

It is found in the cell membrane. Its function is as follows. Efflux pump; part of the gene cluster that mediates the biosynthesis of asperlin, a polyketide showing anti-inflammatory, antitumor and antibiotic activities. Is probably involved in the efflux of asperlin. The chain is Efflux pump alnA from Emericella nidulans (strain FGSC A4 / ATCC 38163 / CBS 112.46 / NRRL 194 / M139) (Aspergillus nidulans).